The primary structure comprises 141 residues: Large ribosomal subunit protein uL11 (141 aa).

This sequence belongs to the universal ribosomal protein uL11 family. As to quaternary structure, part of the ribosomal stalk of the 50S ribosomal subunit. Interacts with L10 and the large rRNA to form the base of the stalk. L10 forms an elongated spine to which L12 dimers bind in a sequential fashion forming a multimeric L10(L12)X complex. In terms of processing, one or more lysine residues are methylated.

Functionally, forms part of the ribosomal stalk which helps the ribosome interact with GTP-bound translation factors. This Clostridioides difficile (strain 630) (Peptoclostridium difficile) protein is Large ribosomal subunit protein uL11.